We begin with the raw amino-acid sequence, 128 residues long: Small ribosomal subunit protein uS9 (128 aa).

The tract at residues 106-128 is disordered; sequence SRKVERKKPGRPKARKKFQFSKR. The span at 109-128 shows a compositional bias: basic residues; the sequence is VERKKPGRPKARKKFQFSKR.

This sequence belongs to the universal ribosomal protein uS9 family.

The sequence is that of Small ribosomal subunit protein uS9 from Azobacteroides pseudotrichonymphae genomovar. CFP2.